A 92-amino-acid polypeptide reads, in one-letter code: Small ribosomal subunit protein uS19c (92 aa).

Belongs to the universal ribosomal protein uS19 family.

It is found in the plastid. The protein localises to the chloroplast. Protein S19 forms a complex with S13 that binds strongly to the 16S ribosomal RNA. The polypeptide is Small ribosomal subunit protein uS19c (Nicotiana tomentosiformis (Tobacco)).